The following is a 136-amino-acid chain: Nucleoside diphosphate kinase (136 aa).

Lysine 10, phenylalanine 58, arginine 86, threonine 92, arginine 104, and asparagine 114 together coordinate ATP. Residue histidine 117 is the Pros-phosphohistidine intermediate of the active site.

This sequence belongs to the NDK family. Homotetramer. Mg(2+) is required as a cofactor.

The protein localises to the cytoplasm. The enzyme catalyses a 2'-deoxyribonucleoside 5'-diphosphate + ATP = a 2'-deoxyribonucleoside 5'-triphosphate + ADP. It catalyses the reaction a ribonucleoside 5'-diphosphate + ATP = a ribonucleoside 5'-triphosphate + ADP. Major role in the synthesis of nucleoside triphosphates other than ATP. The ATP gamma phosphate is transferred to the NDP beta phosphate via a ping-pong mechanism, using a phosphorylated active-site intermediate. The sequence is that of Nucleoside diphosphate kinase from Mycobacterium sp. (strain MCS).